A 199-amino-acid chain; its full sequence is NAD(P)H dehydrogenase (quinone) (199 aa).

Positions Val4–Ile190 constitute a Flavodoxin-like domain. FMN contacts are provided by residues Ser10–Val15 and Thr78–Phe80. An NAD(+)-binding site is contributed by Tyr12. Trp98 serves as a coordination point for substrate. FMN contacts are provided by residues Ser113–Gly119 and His134.

Belongs to the WrbA family. It depends on FMN as a cofactor.

The catalysed reaction is a quinone + NADH + H(+) = a quinol + NAD(+). It carries out the reaction a quinone + NADPH + H(+) = a quinol + NADP(+). In Cupriavidus metallidurans (strain ATCC 43123 / DSM 2839 / NBRC 102507 / CH34) (Ralstonia metallidurans), this protein is NAD(P)H dehydrogenase (quinone).